Here is a 136-residue protein sequence, read N- to C-terminus: Mitochondrial pyruvate carrier 1-like protein (136 aa).

Residues 2-19 (ARMAVLWRKMRDNFQSKE) lie on the Mitochondrial matrix side of the membrane. The helical transmembrane segment at 20–42 (FREYVSSTHFWGPAFSWGLPLAA) threads the bilayer. Over 43–51 (FKDMKASPE) the chain is Mother cell cytoplasmic. Residues 52 to 74 (IISGRMTTALILYSAIFMRFAYR) form a helical membrane-spanning segment. Residues 75–136 (VQPRNLLLMA…PGSQPPKQAS (62 aa)) are Mitochondrial matrix-facing. Residues 111-136 (EAKARDPPATAAAATSPGSQPPKQAS) are disordered. Residues 117–136 (PPATAAAATSPGSQPPKQAS) are compositionally biased toward low complexity.

It belongs to the mitochondrial pyruvate carrier (MPC) (TC 2.A.105) family.

The protein localises to the mitochondrion inner membrane. The catalysed reaction is pyruvate(out) + H(+)(out) = pyruvate(in) + H(+)(in). Mediates the uptake of pyruvate into mitochondria. The chain is Mitochondrial pyruvate carrier 1-like protein (MPC1L) from Homo sapiens (Human).